A 1023-amino-acid chain; its full sequence is StAR-related lipid transfer protein 8 (1023 aa).

Disordered regions lie at residues 46-67 (PMGSSDLLAPPSPGLPATSSCE) and 82-161 (TVSL…KVSK). Positions 99–114 (PSSSDRPLLSPTQGQE) are enriched in polar residues. Ser-108 is modified (phosphoserine). Residues 120–130 (AKKRHRNRSFL) show a composition bias toward basic residues. Over residues 143–161 (GSQQAEPKHSPATSEKVSK) the composition is skewed to polar residues. Arg-169 bears the Asymmetric dimethylarginine mark. A phosphoserine mark is found at Ser-235 and Ser-238. Residues 387–397 (PAQAPAEAEPV) are compositionally biased toward low complexity. Disordered stretches follow at residues 387-461 (PAQA…MNEA) and 467-486 (LAGLQASMPRERRDSGVGAS). Residues 441-459 (ISDTVASSSELDSSGNSMN) are compositionally biased toward polar residues. Phosphoserine occurs at positions 498 and 506. The Rho-GAP domain occupies 573-777 (PPLIHVQRTG…HMISDCKKLF (205 aa)). Residues 733 to 757 (KKDSPSPRIKSKRSLIGRPGPRDLS) form a disordered region. The 209-residue stretch at 809–1017 (AQAAGVSLSL…RDSFPTLQAA (209 aa)) folds into the START domain.

Binds both the SH2 and PTB domains of TNS1. As to expression, widely expressed with highest levels in kidney, lung and placenta.

It localises to the cell junction. Its subcellular location is the focal adhesion. Functionally, accelerates GTPase activity of RHOA and CDC42, but not RAC1. Stimulates the hydrolysis of phosphatidylinositol 4,5-bisphosphate by PLCD1. The polypeptide is StAR-related lipid transfer protein 8 (STARD8) (Homo sapiens (Human)).